We begin with the raw amino-acid sequence, 140 residues long: HTH-type transcriptional regulator AdhR (140 aa).

The region spanning M1 to L69 is the HTH merR-type domain. Residues I3–R22 constitute a DNA-binding region (H-T-H motif). Residues R75–S125 adopt a coiled-coil conformation. The segment at E120–R140 is disordered.

Functionally, transcriptional regulator involved in the response to aldehyde stress. Binds to the promoter region of the adhA-yraA operon, the yraC and its own promoter region; binding is unchanged in the presence of aldehydes. The sequence is that of HTH-type transcriptional regulator AdhR (adhR) from Bacillus subtilis (strain 168).